A 44-amino-acid chain; its full sequence is Photosystem II reaction center protein K (44 aa).

Positions 1 to 7 (MESLLLA) are excised as a propeptide. A helical membrane pass occupies residues 23 to 43 (FPVIPVFFLLLAFVWQAAVGF).

Belongs to the PsbK family. In terms of assembly, PSII is composed of 1 copy each of membrane proteins PsbA, PsbB, PsbC, PsbD, PsbE, PsbF, PsbH, PsbI, PsbJ, PsbK, PsbL, PsbM, PsbT, PsbX, PsbY, PsbZ, Psb30/Ycf12, at least 3 peripheral proteins of the oxygen-evolving complex and a large number of cofactors. It forms dimeric complexes.

The protein localises to the plastid. It localises to the chloroplast thylakoid membrane. Functionally, one of the components of the core complex of photosystem II (PSII). PSII is a light-driven water:plastoquinone oxidoreductase that uses light energy to abstract electrons from H(2)O, generating O(2) and a proton gradient subsequently used for ATP formation. It consists of a core antenna complex that captures photons, and an electron transfer chain that converts photonic excitation into a charge separation. This is Photosystem II reaction center protein K from Thalassiosira pseudonana (Marine diatom).